Here is a 59-residue protein sequence, read N- to C-terminus: Cecropin-C type 1 (59 aa).

Positions M1–A23 are cleaved as a signal peptide.

It is found in the secreted. Functionally, cecropins have lytic and antibacterial activity against several Gram-positive and Gram-negative bacteria. The protein is Cecropin-C type 1 (CECC1) of Aedes albopictus (Asian tiger mosquito).